Reading from the N-terminus, the 356-residue chain is Stomatin-like protein 2, mitochondrial (356 aa).

A mitochondrion-targeting transit peptide spans 1–28 (MLARAARGTGALLLRGSLLASGRAPRRA). Ser-17 carries the phosphoserine; by PKC/PRKCZ modification. Tyr-124 is subject to Phosphotyrosine. The residue at position 145 (Lys-145) is an N6-acetyllysine; alternate. Lys-145 carries the post-translational modification N6-succinyllysine; alternate. Residues 215 to 252 (INVAEGKKQAQILASEAEKAEQINQAAGEASAVLAKAK) are a coiled coil. N6-acetyllysine is present on Lys-233. Positions 321 to 356 (KAPVPGTPDSLSSGSSRDVQGTDASLDEELDRVKMS) are disordered. Thr-327 carries the phosphothreonine modification. Positions 329 to 343 (DSLSSGSSRDVQGTD) are enriched in polar residues. Residue Ser-330 is modified to Phosphoserine.

It belongs to the band 7/mec-2 family. In terms of assembly, forms homooligomers. Interacts with MFN2; may form heterooligomers. Interacts with CACNA2D2. Interacts with PHB1 and PHB2; recruits them to cardiolipin-enriched mitochondrial membranes and stabilizes them. Post-translationally, hyperphosphorylated at Ser-17 in some patients with monoclonal gammopathy of undetermined significance (MGUS), multiple myeloma (MM) and Waldenstrom macroglobulinemia due to impaired dephosphorylation by PP2A. In terms of tissue distribution, ubiquitously expressed at low levels. Expressed in lymphoid tissues (at protein level).

The protein resides in the cell membrane. It localises to the mitochondrion. The protein localises to the mitochondrion inner membrane. It is found in the mitochondrion intermembrane space. Its subcellular location is the membrane raft. The protein resides in the cytoplasm. It localises to the cytoskeleton. In terms of biological role, mitochondrial protein that probably regulates the biogenesis and the activity of mitochondria. Stimulates cardiolipin biosynthesis, binds cardiolipin-enriched membranes where it recruits and stabilizes some proteins including prohibitin and may therefore act in the organization of functional microdomains in mitochondrial membranes. Through regulation of the mitochondrial function may play a role into several biological processes including cell migration, cell proliferation, T-cell activation, calcium homeostasis and cellular response to stress. May play a role in calcium homeostasis through negative regulation of calcium efflux from mitochondria. Required for mitochondrial hyperfusion a pro-survival cellular response to stress which results in increased ATP production by mitochondria. May also regulate the organization of functional domains at the plasma membrane and play a role in T-cell activation through association with the T-cell receptor signaling complex and its regulation. The protein is Stomatin-like protein 2, mitochondrial (STOML2) of Homo sapiens (Human).